The primary structure comprises 457 residues: MSNSAKSVVILAAGKGTRMYSQLPKVLHKLAGKSMVQHVIDTAKSLGAQQTHLVYGHGGELMKETLGSQPVNWVLQAEQLGTGHAMQQAAPFFADDEDILMLYGDVPLITKETLERLIAVKPAGGIGLLTVILDNPMGYGRIVRENGDVVGIVEQKDASEEQLKIKEINTGILVANGGDLKRWLAKLDNNNAQKEYYITDIIALAHQEGRKIETAHPTRHSEMEGVNNRLQLAALERIYQTEQAERLLLEGVMLLDPARFDLRGTLTHGKDVVIDTNVIIEGEVTLGNNVEIGTGCVLKNCVIGDGSIISPYTVIEDANLAQECTVGPFARLRPGAQLADKAHVGNFVEMKKASLGVGSKAGHLTYLGDTEVGANVNIGAGTITCNYDGANKFKTIIGDDVFIGSDTQLVAPVCVANGATIGAGTTLTKDVNENELVISRVKQTHISGWKRPVKKKQ.

A pyrophosphorylase region spans residues 1 to 229 (MSNSAKSVVI…HSEMEGVNNR (229 aa)). Residues 11–14 (LAAG), Lys-25, Gln-76, 81–82 (GT), 103–105 (YGD), Gly-140, Glu-154, Asn-169, and Asn-227 contribute to the UDP-N-acetyl-alpha-D-glucosamine site. Asp-105 contributes to the Mg(2+) binding site. Asn-227 provides a ligand contact to Mg(2+). Residues 230 to 250 (LQLAALERIYQTEQAERLLLE) are linker. Residues 251 to 457 (GVMLLDPARF…GWKRPVKKKQ (207 aa)) form an N-acetyltransferase region. The UDP-N-acetyl-alpha-D-glucosamine site is built by Arg-333 and Lys-351. His-363 acts as the Proton acceptor in catalysis. UDP-N-acetyl-alpha-D-glucosamine-binding residues include Tyr-366 and Asn-377. Acetyl-CoA-binding positions include Ala-380, 386–387 (NY), Ser-405, Ala-423, and Arg-440.

The protein in the N-terminal section; belongs to the N-acetylglucosamine-1-phosphate uridyltransferase family. This sequence in the C-terminal section; belongs to the transferase hexapeptide repeat family. As to quaternary structure, homotrimer. Requires Mg(2+) as cofactor.

The protein resides in the cytoplasm. It carries out the reaction alpha-D-glucosamine 1-phosphate + acetyl-CoA = N-acetyl-alpha-D-glucosamine 1-phosphate + CoA + H(+). The catalysed reaction is N-acetyl-alpha-D-glucosamine 1-phosphate + UTP + H(+) = UDP-N-acetyl-alpha-D-glucosamine + diphosphate. It functions in the pathway nucleotide-sugar biosynthesis; UDP-N-acetyl-alpha-D-glucosamine biosynthesis; N-acetyl-alpha-D-glucosamine 1-phosphate from alpha-D-glucosamine 6-phosphate (route II): step 2/2. The protein operates within nucleotide-sugar biosynthesis; UDP-N-acetyl-alpha-D-glucosamine biosynthesis; UDP-N-acetyl-alpha-D-glucosamine from N-acetyl-alpha-D-glucosamine 1-phosphate: step 1/1. Its pathway is bacterial outer membrane biogenesis; LPS lipid A biosynthesis. In terms of biological role, catalyzes the last two sequential reactions in the de novo biosynthetic pathway for UDP-N-acetylglucosamine (UDP-GlcNAc). The C-terminal domain catalyzes the transfer of acetyl group from acetyl coenzyme A to glucosamine-1-phosphate (GlcN-1-P) to produce N-acetylglucosamine-1-phosphate (GlcNAc-1-P), which is converted into UDP-GlcNAc by the transfer of uridine 5-monophosphate (from uridine 5-triphosphate), a reaction catalyzed by the N-terminal domain. The chain is Bifunctional protein GlmU from Proteus mirabilis (strain HI4320).